The primary structure comprises 1393 residues: DNA glycosylase/AP lyase ROS1 (1393 aa).

Disordered regions lie at residues methionine 1–phenylalanine 25, serine 98–arginine 186, and leucine 237–glutamate 265. Residues serine 98–glutamate 108 show a composition bias toward low complexity. A compositionally biased stretch (basic residues) spans proline 117–valine 126. Basic and acidic residues-rich tracts occupy residues arginine 127–proline 138 and lysine 162–aspartate 171. Basic residues predominate over residues proline 243–glutamine 256. The segment at lysine 528–proline 626 is DEMETER. The segment covering glutamate 653–threonine 672 has biased composition (polar residues). 2 disordered regions span residues glutamate 653–valine 722 and serine 789–glutamine 830. The span at serine 687–histidine 698 shows a compositional bias: low complexity. Over residues glutamate 699 to valine 722 the composition is skewed to basic and acidic residues. A compositionally biased stretch (polar residues) spans lysine 816–glutamine 830. Residue lysine 901 forms a Glycyl lysine isopeptide (Lys-Gly) (interchain with G-Cter in ubiquitin) linkage. Residues cysteine 1038, cysteine 1045, cysteine 1048, and cysteine 1054 each contribute to the [4Fe-4S] cluster site.

This sequence belongs to the DNA glycosylase family. DEMETER subfamily. As to quaternary structure, interacts (via the central region) with ZDP. Binds to RPA2A. Interacts with XRCC1. Interacts probably with a complex made of MBD7, IDM1, IDM2 and IDM3. Interacts with APE1L. [4Fe-4S] cluster serves as cofactor. As to expression, expressed ubiquitously in both vegetative and reproductive organs.

The protein resides in the nucleus. The protein localises to the nucleolus. It catalyses the reaction 2'-deoxyribonucleotide-(2'-deoxyribose 5'-phosphate)-2'-deoxyribonucleotide-DNA = a 3'-end 2'-deoxyribonucleotide-(2,3-dehydro-2,3-deoxyribose 5'-phosphate)-DNA + a 5'-end 5'-phospho-2'-deoxyribonucleoside-DNA + H(+). Stimulated by ZDP. Stimulated by XRCC1. Its function is as follows. Bifunctional DNA glycosylase/lyase, which excises 5-methylcytosine (5-meC) and 5-hydroxymethylcytosine (5-hmeC), leaving an apyrimidinic (AP) site that is subsequently incised by the lyase activity. Generates 3'-phosphor-alpha,beta-unsaturated aldehyde (3'-PUA) as a primary 5-meC excision intermediate. Prevents DNA hypermethylation, specifically in the promoter of otherwise silenced loci. May be involved in DNA repair through its nicking activity on methylated DNA. Binds with similar affinity to both methylated and non-methylated DNA. Highly distributive behavior on DNA substrates containing multiple 5-meC residues. Involved with Pol IV in the remodeling of the 5S rDNA chromatin via DNA methylation modifications during the first days of development post-germination. Participates in UV-B induced- and oxidative DNA damage repair. This is DNA glycosylase/AP lyase ROS1 from Arabidopsis thaliana (Mouse-ear cress).